A 100-amino-acid polypeptide reads, in one-letter code: NADH-quinone oxidoreductase subunit K 2 (100 aa).

Transmembrane regions (helical) follow at residues 2 to 22 (LAIE…TIGV), 29 to 49 (IVIF…FIAF), and 61 to 81 (FVFF…ALMI).

The protein belongs to the complex I subunit 4L family. In terms of assembly, NDH-1 is composed of 14 different subunits. Subunits NuoA, H, J, K, L, M, N constitute the membrane sector of the complex.

The protein localises to the cell inner membrane. The enzyme catalyses a quinone + NADH + 5 H(+)(in) = a quinol + NAD(+) + 4 H(+)(out). Its function is as follows. NDH-1 shuttles electrons from NADH, via FMN and iron-sulfur (Fe-S) centers, to quinones in the respiratory chain. The immediate electron acceptor for the enzyme in this species is believed to be ubiquinone. Couples the redox reaction to proton translocation (for every two electrons transferred, four hydrogen ions are translocated across the cytoplasmic membrane), and thus conserves the redox energy in a proton gradient. The chain is NADH-quinone oxidoreductase subunit K 2 from Geobacter sp. (strain M21).